We begin with the raw amino-acid sequence, 403 residues long: GTPase Obg (403 aa).

In terms of domain architecture, Obg spans Met1 to Leu159. One can recognise an OBG-type G domain in the interval Ala160–Ile333. GTP-binding positions include Gly166–Ser173, Phe191–Val195, Asp213–Gly216, Asn283–Asp286, and Ser314–Ala316. Mg(2+)-binding residues include Ser173 and Thr193. The interval Glu363 to Pro403 is disordered. Residues Gln365–Ile397 are compositionally biased toward acidic residues.

It belongs to the TRAFAC class OBG-HflX-like GTPase superfamily. OBG GTPase family. As to quaternary structure, monomer. Mg(2+) serves as cofactor.

It localises to the cytoplasm. In terms of biological role, an essential GTPase which binds GTP, GDP and possibly (p)ppGpp with moderate affinity, with high nucleotide exchange rates and a fairly low GTP hydrolysis rate. Plays a role in control of the cell cycle, stress response, ribosome biogenesis and in those bacteria that undergo differentiation, in morphogenesis control. This Haemophilus influenzae (strain PittEE) protein is GTPase Obg.